We begin with the raw amino-acid sequence, 652 residues long: Acetyl-coenzyme A synthetase (652 aa).

Residues 191–194 (RAGR), Thr-311, and Asn-335 contribute to the CoA site. Residues 387-389 (GEP), 411-416 (DTWWQT), Asp-500, and Arg-515 contribute to the ATP site. Ser-523 provides a ligand contact to CoA. Arg-526 contacts ATP. Residues Val-537, His-539, and Ile-542 each contribute to the Mg(2+) site. CoA is bound at residue Arg-584. Lys-609 carries the post-translational modification N6-acetyllysine.

Belongs to the ATP-dependent AMP-binding enzyme family. Mg(2+) is required as a cofactor. Post-translationally, acetylated. Deacetylation by the SIR2-homolog deacetylase activates the enzyme.

It catalyses the reaction acetate + ATP + CoA = acetyl-CoA + AMP + diphosphate. Its function is as follows. Catalyzes the conversion of acetate into acetyl-CoA (AcCoA), an essential intermediate at the junction of anabolic and catabolic pathways. Acs undergoes a two-step reaction. In the first half reaction, Acs combines acetate with ATP to form acetyl-adenylate (AcAMP) intermediate. In the second half reaction, it can then transfer the acetyl group from AcAMP to the sulfhydryl group of CoA, forming the product AcCoA. Functionally, enables the cell to use acetate during aerobic growth to generate energy via the TCA cycle, and biosynthetic compounds via the glyoxylate shunt. Acetylates CheY, the response regulator involved in flagellar movement and chemotaxis. The sequence is that of Acetyl-coenzyme A synthetase from Cronobacter sakazakii (strain ATCC BAA-894) (Enterobacter sakazakii).